Here is a 313-residue protein sequence, read N- to C-terminus: Olfactory receptor 51A4 (313 aa).

The Extracellular segment spans residues 1-27; sequence MSIINTSYVEITTFFLVGMPGLEYAHI. Asn-5 is a glycosylation site (N-linked (GlcNAc...) asparagine). The helical transmembrane segment at 28–48 threads the bilayer; the sequence is WISIPICSMYLIAILGNGTIL. The Cytoplasmic segment spans residues 49 to 56; sequence FIIKTEPS. A helical transmembrane segment spans residues 57–77; the sequence is LHEPMYYFLSMLAMSDLGLSL. Topologically, residues 78–101 are extracellular; it reads SSLPTVLSIFLFNAPEISSNACFA. A disulfide bridge connects residues Cys-99 and Cys-191. Residues 102-122 form a helical membrane-spanning segment; that stretch reads QEFFIHGFSVLESSVLLIMSF. The Cytoplasmic portion of the chain corresponds to 123-141; it reads DRFLAIHNPLRYTSILTTV. Residues 142–162 traverse the membrane as a helical segment; that stretch reads RVAQIGIVFSFKSMLLVLPFP. Topologically, residues 163-198 are extracellular; it reads FTLRNLRYCKKNQLSHSYCLHQDVMKLACSDNRIDV. The chain crosses the membrane as a helical span at residues 199-218; the sequence is IYGFFGALCLMVDFILIAVS. The Cytoplasmic segment spans residues 219 to 238; the sequence is YTLILKTVLGIASKKEQLKA. Residues 239–259 traverse the membrane as a helical segment; the sequence is LNTCVSHICAVIIFYLPIINL. The Extracellular segment spans residues 260 to 274; that stretch reads AVVHRFARHVSPLIN. Residues 275–295 form a helical membrane-spanning segment; it reads VLMANVLLLVPPLTNPIVYCV. Over 296-313 the chain is Cytoplasmic; the sequence is KTKQIRVRVVAKLCQRKI.

It belongs to the G-protein coupled receptor 1 family.

It localises to the cell membrane. Functionally, odorant receptor. In Homo sapiens (Human), this protein is Olfactory receptor 51A4 (OR51A4).